The following is a 444-amino-acid chain: Cadaverine/lysine antiporter (444 aa).

12 helical membrane passes run 7 to 27 (IGLFACTGVVAGNMMGSGIAL), 35 to 55 (IGGIAIWGWIISIIGAMSLAY), 95 to 115 (IGNLAIGITAVSYLSTFFPVL), 123 to 143 (IACIAIVWVFTFVNMLGGTWV), 149 to 169 (IGLVLVLIPVVMTAIVGWHWF), 193 to 213 (ILLCLWAFVGVESAAVSTGMV), 222 to 242 (LATMLGTGLAGIVYIAATQVL), 273 to 293 (LVSAFTAFACLTSLGSWMMLV), 323 to 343 (LLLAAVKMTALMILITLMNSA), 354 to 374 (LTGIAVLLTMLPYFYSCVDLI), 384 to 404 (FVSLICSVLGCVFCFIALMGA), and 405 to 425 (SSFELAGTFIVSLIILMFYAR).

Belongs to the amino acid-polyamine-organocation (APC) superfamily. Basic amino acid/polyamine antiporter (APA) (TC 2.A.3.2) family.

The protein localises to the cell inner membrane. The catalysed reaction is cadaverine(in) + L-lysine(out) = cadaverine(out) + L-lysine(in). Functionally, under acidic conditions, in the presence of lysine, functions as a cadaverine:lysine antiporter that facilitates the excretion of cadaverine and the uptake of lysine. The sequence is that of Cadaverine/lysine antiporter (cadB) from Escherichia coli O157:H7.